Consider the following 310-residue polypeptide: Olfactory receptor 5T7 (310 aa).

The Extracellular portion of the chain corresponds to 1–23; the sequence is MENITEVTEFILMGFTDNADLEI. N3 is a glycosylation site (N-linked (GlcNAc...) asparagine). The helical transmembrane segment at 24–44 threads the bilayer; it reads LSFFLFLAIYLFTLMGNLGLI. Over 45 to 52 the chain is Cytoplasmic; that stretch reads TLVIGDSR. A helical membrane pass occupies residues 53-73; the sequence is LHNPMYYFLSVLSSVDACYST. At 74–97 the chain is on the extracellular side; sequence VITPQMVVDFVSEKKVISFIGCAT. C95 and C187 form a disulfide bridge. A helical transmembrane segment spans residues 98 to 118; it reads QMFLAVTFGTTECFLLAAMAY. Residues 119–131 lie on the Cytoplasmic side of the membrane; it reads DRYVAIHNPLMYV. The chain crosses the membrane as a helical span at residues 132–152; it reads VSMSPRVYVPLIIASYAGGIL. Residues 153–194 lie on the Extracellular side of the membrane; sequence HAVIHTVATFRLSFCGSNKISHIFCDIPPLLAISCSDTHFNQ. A helical membrane pass occupies residues 195 to 215; it reads LLLFYCAGFIEVVTILIVLLS. Over 216–235 the chain is Cytoplasmic; that stretch reads YGFILSVILKTRSTEGKRKV. A helical transmembrane segment spans residues 236–256; that stretch reads FSTCGSHLMAVSTFHGTVLFM. Topologically, residues 257–269 are extracellular; sequence YVRPSDSYALEHD. A helical transmembrane segment spans residues 270–290; sequence MMVSIFYSIVIPMLNPLIYSL. The Cytoplasmic portion of the chain corresponds to 291-310; it reads RNKDVKEAIKKVFGKRILCG.

The protein belongs to the G-protein coupled receptor 1 family.

The protein localises to the cell membrane. Functionally, potential odorant receptor. The sequence is that of Olfactory receptor 5T7 from Mus musculus (Mouse).